We begin with the raw amino-acid sequence, 232 residues long: MSDPAVEVTPAVPVASPAKAKKEKKPKSDKPKKPKAPRTHPPVSEMVVNAVKTLKERGGSSLQAIKKFLVAQYKVDVDKLAPFIKKYLKSAVEKGQLLQTKGKGASGSFKLPAAAKKEKVVKKPTKAAAEKKPKKAAAKPKKAGEKKVKKTIAKKPKAAAATKIKKPVAKTTKKPAAAKPAAKKAAPKPKAAPKPKAAKTETKPKRAAAPKAKKPAAEKKPKAAKKPAAKKA.

Over residues Met-1–Ala-18 the composition is skewed to low complexity. Disordered regions lie at residues Met-1–Ser-44 and Gln-99–Ala-232. Residues Thr-39–Ala-113 enclose the H15 domain. 5 stretches are compositionally biased toward basic residues: residues Lys-132 to Lys-141, Lys-147 to Lys-173, Ala-181 to Ala-197, Lys-205 to Lys-214, and Lys-222 to Ala-232.

Belongs to the histone H1/H5 family.

Its subcellular location is the nucleus. It localises to the chromosome. Its function is as follows. Histones H1 are necessary for the condensation of nucleosome chains into higher-order structures. The polypeptide is Histone H1B (Chironomus tentans (Midge)).